Here is a 277-residue protein sequence, read N- to C-terminus: Uracil phosphoribosyltransferase homolog (277 aa).

The interval methionine 1 to aspartate 69 is disordered. Over residues alanine 37–aspartate 69 the composition is skewed to low complexity. Residues arginine 101, arginine 110, and glutamate 144–asparagine 147 contribute to the GTP site. Arginine 154 serves as a coordination point for 5-phospho-alpha-D-ribose 1-diphosphate. Arginine 171 and arginine 200 together coordinate GTP. Tyrosine 206–threonine 214 is a 5-phospho-alpha-D-ribose 1-diphosphate binding site. Residue threonine 267–phenylalanine 269 coordinates uracil.

The protein belongs to the UPRTase family.

It is found in the cytoplasm. Its subcellular location is the nucleus. This Gallus gallus (Chicken) protein is Uracil phosphoribosyltransferase homolog (UPRT).